An 895-amino-acid chain; its full sequence is Stonin-2 (895 aa).

Disordered regions lie at residues 15–119, 145–222, and 234–280; these read WVSF…PPHK, SESS…APPV, and EDNE…KSTL. The span at 64 to 73 shows a compositional bias: basic and acidic residues; it reads SHSEQDDSSE. Over residues 145 to 193 the composition is skewed to polar residues; sequence SESSWTTHSEDTSSPSVAPSYTDLQLINTEEQASGRASGTDSTDNSSSL. The span at 241 to 251 shows a compositional bias: pro residues; that stretch reads PSPPVPSPKKP. Threonine 253 carries the post-translational modification Phosphothreonine. 2 positions are modified to phosphoserine: serine 278 and serine 299. Short sequence motifs (NPF) lie at residues 310–312 and 326–328; these read NPF. Residues 386–421 form a disordered region; it reads QIDDPDPVGNTALPDDDPTASVELDAPSPASALSQP. Residues 424–557 form the SHD domain; it reads GWPMMLRIPE…DLPVLSMDLS (134 aa). An MHD domain is found at 565-872; sequence EEEITVDVRD…AHYSYKVEIE (308 aa). At serine 759 the chain carries Phosphoserine.

It belongs to the Stoned B family. As to quaternary structure, interacts with the second C2 domain of synaptotagmins SYT1 and SYT2. Interacts with EPS15, EPS15R and ITSN1. Interacts indirectly with the AP-2 adapter complex. Interacts with TOR1A and COPS4; the interaction controls STON2 protein stability. Phosphorylated in vitro by PKD. Post-translationally, neddylated; deneddylated via its interaction with the COP9 signalosome (CSN) complex through TOR1A and COPS4. In terms of processing, ubiquitinated; leading to its degradation.

It is found in the cytoplasm. The protein localises to the membrane. Its subcellular location is the synapse. The protein resides in the synaptosome. Adapter protein involved in endocytic machinery. Involved in the synaptic vesicle recycling. May facilitate clathrin-coated vesicle uncoating. This chain is Stonin-2 (Ston2), found in Mus musculus (Mouse).